We begin with the raw amino-acid sequence, 493 residues long: Guanosine-5'-triphosphate,3'-diphosphate pyrophosphatase (493 aa).

This sequence belongs to the GppA/Ppx family. GppA subfamily.

The catalysed reaction is guanosine 3'-diphosphate 5'-triphosphate + H2O = guanosine 3',5'-bis(diphosphate) + phosphate + H(+). The protein operates within purine metabolism; ppGpp biosynthesis; ppGpp from GTP: step 2/2. Functionally, catalyzes the conversion of pppGpp to ppGpp. Guanosine pentaphosphate (pppGpp) is a cytoplasmic signaling molecule which together with ppGpp controls the 'stringent response', an adaptive process that allows bacteria to respond to amino acid starvation, resulting in the coordinated regulation of numerous cellular activities. This chain is Guanosine-5'-triphosphate,3'-diphosphate pyrophosphatase, found in Salmonella paratyphi A (strain ATCC 9150 / SARB42).